The chain runs to 535 residues: Putative transcription activator BRLF1 homolog (535 aa).

The interval 384 to 426 (KTNFPLKRKRQSRNIDPNTPRRPRGRPKGSKTKKRPTCSPALF) is disordered. Over residues 404-419 (RRPRGRPKGSKTKKRP) the composition is skewed to basic residues.

The protein belongs to the herpesviridae TAF50 family.

Functionally, transcription activation. Regulates the delayed-early 110 kDa promoter. The chain is Putative transcription activator BRLF1 homolog (50) from Saimiriine herpesvirus 2 (strain 11) (SaHV-2).